The primary structure comprises 244 residues: Proteasome subunit alpha (244 aa).

This sequence belongs to the peptidase T1A family. As to quaternary structure, the 20S proteasome core is composed of 14 alpha and 14 beta subunits that assemble into four stacked heptameric rings, resulting in a barrel-shaped structure. The two inner rings, each composed of seven catalytic beta subunits, are sandwiched by two outer rings, each composed of seven alpha subunits. The catalytic chamber with the active sites is on the inside of the barrel. Has a gated structure, the ends of the cylinder being occluded by the N-termini of the alpha-subunits. Is capped by the proteasome-associated ATPase, ARC.

The protein resides in the cytoplasm. It functions in the pathway protein degradation; proteasomal Pup-dependent pathway. Its activity is regulated as follows. The formation of the proteasomal ATPase ARC-20S proteasome complex, likely via the docking of the C-termini of ARC into the intersubunit pockets in the alpha-rings, may trigger opening of the gate for substrate entry. Interconversion between the open-gate and close-gate conformations leads to a dynamic regulation of the 20S proteasome proteolysis activity. Its function is as follows. Component of the proteasome core, a large protease complex with broad specificity involved in protein degradation. This Xylanimonas cellulosilytica (strain DSM 15894 / JCM 12276 / CECT 5975 / KCTC 9989 / LMG 20990 / NBRC 107835 / XIL07) protein is Proteasome subunit alpha.